Here is a 195-residue protein sequence, read N- to C-terminus: Imidazoleglycerol-phosphate dehydratase (195 aa).

It belongs to the imidazoleglycerol-phosphate dehydratase family.

The protein localises to the cytoplasm. It catalyses the reaction D-erythro-1-(imidazol-4-yl)glycerol 3-phosphate = 3-(imidazol-4-yl)-2-oxopropyl phosphate + H2O. Its pathway is amino-acid biosynthesis; L-histidine biosynthesis; L-histidine from 5-phospho-alpha-D-ribose 1-diphosphate: step 6/9. This chain is Imidazoleglycerol-phosphate dehydratase, found in Geobacillus kaustophilus (strain HTA426).